The following is an 89-amino-acid chain: Large ribosomal subunit protein bL27 (89 aa).

The tract at residues 1-26 is disordered; that stretch reads MAHKKAGGSSRNGRDSAGQRRGVKRF.

This sequence belongs to the bacterial ribosomal protein bL27 family.

The chain is Large ribosomal subunit protein bL27 from Nitratidesulfovibrio vulgaris (strain DSM 19637 / Miyazaki F) (Desulfovibrio vulgaris).